A 348-amino-acid polypeptide reads, in one-letter code: RNA 3'-terminal phosphate cyclase (348 aa).

Residues Gln-107 and 290-294 each bind ATP; that span reads HLADQ. Catalysis depends on His-316, which acts as the Tele-AMP-histidine intermediate.

This sequence belongs to the RNA 3'-terminal cyclase family. Type 1 subfamily.

The protein localises to the cytoplasm. It catalyses the reaction a 3'-end 3'-phospho-ribonucleotide-RNA + ATP = a 3'-end 2',3'-cyclophospho-ribonucleotide-RNA + AMP + diphosphate. In terms of biological role, catalyzes the conversion of 3'-phosphate to a 2',3'-cyclic phosphodiester at the end of RNA. The mechanism of action of the enzyme occurs in 3 steps: (A) adenylation of the enzyme by ATP; (B) transfer of adenylate to an RNA-N3'P to produce RNA-N3'PP5'A; (C) and attack of the adjacent 2'-hydroxyl on the 3'-phosphorus in the diester linkage to produce the cyclic end product. The biological role of this enzyme is unknown but it is likely to function in some aspects of cellular RNA processing. The sequence is that of RNA 3'-terminal phosphate cyclase (rtcA) from Nostoc sp. (strain PCC 7120 / SAG 25.82 / UTEX 2576).